The primary structure comprises 420 residues: Glucose-1-phosphate adenylyltransferase (420 aa).

Alpha-D-glucose 1-phosphate contacts are provided by residues tyrosine 107, glycine 172, 187-188 (EK), and serine 205.

It belongs to the bacterial/plant glucose-1-phosphate adenylyltransferase family. In terms of assembly, homotetramer.

The enzyme catalyses alpha-D-glucose 1-phosphate + ATP + H(+) = ADP-alpha-D-glucose + diphosphate. The protein operates within glycan biosynthesis; glycogen biosynthesis. Its function is as follows. Involved in the biosynthesis of ADP-glucose, a building block required for the elongation reactions to produce glycogen. Catalyzes the reaction between ATP and alpha-D-glucose 1-phosphate (G1P) to produce pyrophosphate and ADP-Glc. This is Glucose-1-phosphate adenylyltransferase from Sinorhizobium fredii (strain NBRC 101917 / NGR234).